Reading from the N-terminus, the 308-residue chain is U-box domain-containing protein 54 (308 aa).

The segment at 172–235 is disordered; it reads FSEFSTSAEK…NESDEDPRLE (64 aa). Over residues 210 to 227 the composition is skewed to basic and acidic residues; that stretch reads ESPKKGRKETIEKSKSNE. Residues 232–306 form the U-box domain; sequence PRLEDFKCPI…KDWLEKNPNY (75 aa).

It carries out the reaction S-ubiquitinyl-[E2 ubiquitin-conjugating enzyme]-L-cysteine + [acceptor protein]-L-lysine = [E2 ubiquitin-conjugating enzyme]-L-cysteine + N(6)-ubiquitinyl-[acceptor protein]-L-lysine.. It functions in the pathway protein modification; protein ubiquitination. Its function is as follows. Functions as an E3 ubiquitin ligase. The polypeptide is U-box domain-containing protein 54 (PUB54) (Arabidopsis thaliana (Mouse-ear cress)).